A 219-amino-acid chain; its full sequence is Transmembrane emp24 domain-containing protein 10 (219 aa).

An N-terminal signal peptide occupies residues 1–31 (MSGSSGPLSWPGPRPCALLFLLLLGPSSVLA). The required for interaction with STX17 stretch occupies residues 1–142 (MSGSSGPLSW…KNYEEIAKVE (142 aa)). Topologically, residues 32–185 (ISFHLPVNSR…RDTNESTNTR (154 aa)) are lumenal. Residues 41-193 (RKCLREEIHK…TRVLYFSIFS (153 aa)) form the GOLD domain. The required for TMED10 and TMED2 cis-Golgi network localization stretch occupies residues 147-178 (LEVELRRLEDLSESIVNDFAYMKKREEEMRDT). Dimethylated arginine occurs at positions 171 and 176. N-linked (GlcNAc...) asparagine glycosylation is present at asparagine 179. A helical transmembrane segment spans residues 186-206 (VLYFSIFSMLCLIGLATWQVF). Positions 204–219 (QVFYLRRFFKAKKLIE) are interaction with COPG1. Topologically, residues 207–219 (YLRRFFKAKKLIE) are cytoplasmic. The interaction with ARF1 and IL1B stretch occupies residues 207–219 (YLRRFFKAKKLIE). The COPII vesicle coat-binding motif lies at 211–212 (FF). A COPI vesicle coat-binding motif is present at residues 211–219 (FFKAKKLIE).

This sequence belongs to the EMP24/GP25L family. In terms of assembly, predominantly dimeric and to a lesser extent monomeric in the ER. Monomer and dimer in ERGIC and cis-Golgi network. Forms homooligomer (via GOLD domain); the assembly is promoted by direct binding with leaderless cargos and may form a protein channel that facilitates cargo entry into the ERGIC. Forms heterooligomeric complexes with other members of the p24 family such as TMED2, TMED7 and TMED9. Interacts (via GOLD domain) with TMED2 (via GOLD domain); the complex is required for export of TMED10 from the ER to the cis-Golgi network; the complex is proposed to be involved in cis-Golgi network dynamics and / or biogenesis. Associates with the COPI vesicle coat subunits (coatomer). Tetramerization of the cytoplasmic domain at the Golgi membrane in vitro; the complex is proposed to interact with COPI coatomer and induce budding of the vesicles. Interacts with COPG1; the interaction involves TMED10 homodimer. Interacts with ARF1 (GDP-bound); the interaction probably involves a TMED10 oligomer. Interacts with SEC23A, SEC24B, SEC24C and SEC24D components of the coat protein complex II/COPII, indicative of an association of TMED10 with the COPII vesicle coat. Interacts with CD59. Interacts with MPPE1/PGAP5; the complex might recruit and sort GPI-anchored proteins to the ER-exit site, or the interaction might lead to recycling of PGAP5 between the ER and the Golgi. Interacts with F2LR1/PAR2. Interacts with KDELR2/ERD2; the interaction is disrupted by KDELR2 ligand. Found in a complex composed at least of SURF4, TMED2 and TMED10. Associates with the presenilin-dependent gamma-secretase complex. Interacts with STX17; the interaction is direct. Interacts with IL-1; the interaction is direct. Interacts with RAB21 (active GTP-bound form); the interaction is indirect and regulates TMED10 abundance and localization at the Golgi.

It localises to the endoplasmic reticulum membrane. It is found in the endoplasmic reticulum-Golgi intermediate compartment membrane. The protein localises to the golgi apparatus membrane. The protein resides in the golgi apparatus. Its subcellular location is the cis-Golgi network membrane. It localises to the trans-Golgi network membrane. It is found in the cytoplasmic vesicle. The protein localises to the secretory vesicle membrane. The protein resides in the cell membrane. Its subcellular location is the melanosome. Cargo receptor involved in protein vesicular trafficking and quality control in the endoplasmic reticulum (ER) and Golgi. The p24 protein family is a group of transmembrane proteins that bind coat protein complex I/COPI and coat protein complex II/COPII involved in vesicular trafficking between the membranes. Acts at the lumenal side for incorporation of secretory cargo molecules into transport vesicles and involved in vesicle coat formation at the cytoplasmic side. Mainly functions in the early secretory pathway and cycles between the ER, ER-Golgi intermediate compartment (ERGIC) and Golgi, mediating cargo transport through COPI and COPII-coated vesicles. In COPII vesicle-mediated anterograde transport, involved in the transport of GPI-anchored proteins by acting together with TMED2 as their cargo receptor; the function specifically implies SEC24C and SEC24D of the COPII vesicle coat and lipid raft-like microdomains of the ER. Recognizes GPI anchors structural remodeled in the ER by the GPI inositol-deacylase/PGAP1 and the metallophosphoesterase MPPE1/PGAP5. In COPI vesicle-mediated retrograde transport, involved in the biogenesis of COPI vesicles and vesicle coat recruitment. Involved in trafficking of amyloid beta A4 protein and soluble APP-beta release (independent from the modulation of gamma-secretase activity). Involved in the KDELR2-mediated retrograde transport of the toxin A subunit (CTX-A-K63)together with COPI and the COOH terminus of KDELR2. On Golgi membranes, acts as a primary receptor for ARF1-GDP, a GTP-binding protein involved in COPI-vesicle formation. Increases coatomer-dependent GTPase-activating activity of ARFGAP2 which mediates the hydrolysis of ARF1-bound GTP and therefore modulates protein trafficking from the Golgi apparatus. Involved in the exocytic trafficking of G protein-coupled receptors F2LR1/PAR2 (trypsin and tryspin-like enzyme receptor), OPRM1 (opioid receptor) and P2RY4 (UTD and UDP receptor) from the Golgi to the plasma membrane, thus contributing to receptor resensitization. In addition to its cargo receptor activity, may also act as a protein channel after oligomerization, facilitating the post-translational entry of leaderless cytoplasmic cargo into the ERGIC. Involved in the translocation into ERGIC, the vesicle entry and the secretion of leaderless cargos (lacking the secretion signal sequence), including the mature form of interleukin 1/IL-1 family members, the alpha-crystallin B chain HSPB5, the carbohydrate-binding proteins galectin-1/LGALS1 and galectin-3/LGALS3, the microtubule-associated protein Tau/MAPT, and the annexin A1/ANXA1; the translocation process is dependent on cargo protein unfolding and enhanced by chaperones HSP90AB1 and HSP90B1/GRP9. Could also associates with the presenilin-dependent gamma-secretase complex in order to regulate gamma-cleavages of the amyloid beta A4 protein to yield amyloid-beta 40/Abeta40. In Mesocricetus auratus (Golden hamster), this protein is Transmembrane emp24 domain-containing protein 10 (TMED10).